A 403-amino-acid polypeptide reads, in one-letter code: S-adenosylmethionine synthase (403 aa).

H17 contributes to the ATP binding site. Residue D19 participates in Mg(2+) binding. A K(+)-binding site is contributed by E45. Positions 58 and 104 each coordinate L-methionine. Positions 104–114 (QSSDIAQGVNT) are flexible loop. Residues 179–181 (DGK), 250–251 (KF), D259, 265–266 (RK), A282, and K286 each bind ATP. D259 is an L-methionine binding site. K290 is an L-methionine binding site.

This sequence belongs to the AdoMet synthase family. In terms of assembly, homotetramer; dimer of dimers. Requires Mg(2+) as cofactor. It depends on K(+) as a cofactor.

It localises to the cytoplasm. It catalyses the reaction L-methionine + ATP + H2O = S-adenosyl-L-methionine + phosphate + diphosphate. Its pathway is amino-acid biosynthesis; S-adenosyl-L-methionine biosynthesis; S-adenosyl-L-methionine from L-methionine: step 1/1. Functionally, catalyzes the formation of S-adenosylmethionine (AdoMet) from methionine and ATP. The overall synthetic reaction is composed of two sequential steps, AdoMet formation and the subsequent tripolyphosphate hydrolysis which occurs prior to release of AdoMet from the enzyme. This Mycobacterium leprae (strain Br4923) protein is S-adenosylmethionine synthase.